The sequence spans 1276 residues: Sterol regulatory element-binding protein cleavage-activating protein (1276 aa).

The Cytoplasmic portion of the chain corresponds to 1 to 18 (MTLTERLREKISQAFYNH). The chain crosses the membrane as a helical span at residues 19–39 (GLLCASYPIPIILFTGLCILA). Over 40–279 (CCYPLLKLPL…NLVHVHFKEE (240 aa)) the chain is Lumenal. Residues 46-284 (KLPLPGTGPV…HFKEEIGIAE (239 aa)) form a loop-1 region. A disordered region spans residues 60–81 (PVKGYSPPPADSDHKQGEPSEQ). Residue Asn263 is glycosylated (N-linked (GlcNAc...) asparagine). Residues 280-300 (IGIAELIPLVTTYIILFAYIY) traverse the membrane as a helical segment. The region spanning 284–442 (ELIPLVTTYI…MLFFTTVLSI (159 aa)) is the SSD domain. At 301–312 (FSTRKIDMVKSK) the chain is on the cytoplasmic side. The helical transmembrane segment at 313–333 (WGLALAAVVTVLSSLLMSVGL) threads the bilayer. The Lumenal segment spans residues 334–344 (CTLFGLTPTLN). Residues 345-365 (GGEIFPYLVVVIGLENVLVLT) form a helical membrane-spanning segment. Over 366 to 401 (KSVVSTPVDLEVKLRIAQGLSSESWSIMKNVATELG) the chain is Cytoplasmic. Residues 402 to 422 (IILIGYFTLVPAIQEFCLFAV) form a helical membrane-spanning segment. Val423 is a topological domain (lumenal). The chain crosses the membrane as a helical span at residues 424–444 (GLVSDFFLQMLFFTTVLSIDI). The Cytoplasmic portion of the chain corresponds to 445–518 (RRMELADLNK…FLARTRLAQR (74 aa)). Positions 447–452 (MELADL) match the ER export signal motif. Glycyl lysine isopeptide (Lys-Gly) (interchain with G-Cter in ubiquitin) cross-links involve residues Lys454 and Lys466. The helical transmembrane segment at 519-539 (LIMAGTVVWIGILVYTDPAGL) threads the bilayer. Residues 535–710 (DPAGLRTYLA…QTHGDITLYK (176 aa)) form a loop-7 region. Residues 540-707 (RTYLAAQVTE…GGTQTHGDIT (168 aa)) are Lumenal-facing. Residues Asn590 and Asn641 are each glycosylated (N-linked (GlcNAc...) asparagine). A helical transmembrane segment spans residues 708 to 728 (LYKVAALGLAAGIVLVLLLLC). Over 729–1276 (LYRVLCPRNY…YVPSVLEKLD (548 aa)) the chain is Cytoplasmic. Residues 731 to 1276 (RVLCPRNYGQ…YVPSVLEKLD (546 aa)) are interaction with SREBF2. One copy of the WD 1 repeat lies at 771–811 (VLRGHLMDIECLASDGMLLVSCCLAGQVCVWDAQTGDCLTR). A phosphoserine mark is found at Ser821, Ser837, Ser843, Ser850, Ser905, and Ser934. Residues 834–903 (ERLSDGGKAS…RHRAGCGRSR (70 aa)) form a disordered region. A disordered region spans residues 928–958 (SALRPPSPGPPLPQASQEEGTAPEKGSPPLA). WD repeat units lie at residues 949–999 (APEK…LCCS) and 1002–1039 (EISS…SLSP). Arg1048 carries the omega-N-methylarginine modification. WD repeat units follow at residues 1074-1111 (AHQK…CLFT), 1114-1152 (GHSG…RVSH), 1155-1192 (AHRG…KLYS), and 1194-1232 (QQDL…LLQT).

Belongs to the WD repeat SCAP family. In terms of assembly, membrane region forms a homotetramer. Component of the SCAP-SREBP complex (composed of SCAP and SREBF1/SREBP1 or SREBF2/SREBP2); interacts with SREBF1/SREBP1 or SREBF2/SREBP2 through its C-terminal cytoplasmic domain. Forms a ternary complex with INSIG1 or INSIG2 through its transmembrane domains at high sterol concentrations. Interacts with PAQR3; the interaction anchors the SCAP-SREBP complex to the Golgi apparatus in low cholesterol conditions. Interacts with the SEC23-SEC24 complex in a SAR1-GTP-dependent manner through an ER export signal in its third cytoplasmic loop. Interacts with RNF139; the interaction inhibits the interaction of SCAP with SEC24B and hampering the ER to Golgi transport of the SCAP-SREBP complex. Interacts with SPRING1. Ubiquitinated at Lys-454 and Lys-466. RNF145 triggers ubiquitination of SCAP, likely inhibiting SCAP-SREBP complex transport to the Golgi apparatus and the subsequent processing/maturation of SREBF2/SREBP2.

Its subcellular location is the endoplasmic reticulum membrane. It localises to the golgi apparatus membrane. The protein resides in the cytoplasmic vesicle. It is found in the COPII-coated vesicle membrane. In terms of biological role, escort protein required for cholesterol as well as lipid homeostasis. Regulates export of the SCAP-SREBP complex from the endoplasmic reticulum to the Golgi upon low cholesterol, thereby regulating the processing of sterol regulatory element-binding proteins (SREBPs) SREBF1/SREBP1 and SREBF2/SREBP2. At high sterol concentrations, formation of a ternary complex with INSIG (INSIG1 or INSIG2) leads to mask the ER export signal in SCAP, promoting retention of the complex in the endoplasmic reticulum. Low sterol concentrations trigger release of INSIG, a conformational change in the SSD domain of SCAP, unmasking of the ER export signal, promoting recruitment into COPII-coated vesicles and transport of the SCAP-SREBP to the Golgi: in the Golgi, SREBPs are then processed, releasing the transcription factor fragment of SREBPs from the membrane, its import into the nucleus and up-regulation of LDLR, INSIG1 and the mevalonate pathway. Binds cholesterol via its SSD domain. In Rattus norvegicus (Rat), this protein is Sterol regulatory element-binding protein cleavage-activating protein.